The primary structure comprises 330 residues: Fructose-1,6-bisphosphatase class 1 (330 aa).

4 residues coordinate Mg(2+): glutamate 84, aspartate 103, leucine 105, and aspartate 106. Substrate is bound by residues 106 to 109, asparagine 196, and lysine 262; that span reads DGSS. Residue glutamate 268 coordinates Mg(2+).

It belongs to the FBPase class 1 family. As to quaternary structure, homotetramer. Mg(2+) serves as cofactor.

It is found in the cytoplasm. The catalysed reaction is beta-D-fructose 1,6-bisphosphate + H2O = beta-D-fructose 6-phosphate + phosphate. It functions in the pathway carbohydrate biosynthesis; gluconeogenesis. The protein is Fructose-1,6-bisphosphatase class 1 of Shewanella putrefaciens (strain CN-32 / ATCC BAA-453).